Consider the following 771-residue polypeptide: Probable glycosyltransferase STELLO1 (771 aa).

The interval 1–23 is disordered; sequence MLVQDRAAPSPAKPPKSQIRELP. The Cytoplasmic portion of the chain corresponds to 1-50; the sequence is MLVQDRAAPSPAKPPKSQIRELPTHQQIRRRFSEPKNLDFSTWFSENLSR. Residues 51–71 traverse the membrane as a helical segment; it reads IAVFSLLIVTIVAFFFLYNTT. Topologically, residues 72 to 771 are lumenal; the sequence is DTASLLCFQS…EGDPLLMELV (700 aa). N-linked (GlcNAc...) asparagine glycosylation is found at asparagine 242 and asparagine 729.

The protein belongs to the STELLO family. Homo- and heterodimer with STL2. Interacts with CESA1, CESA3, CESA4, CESA6, CESA7 and CESA8, but not with GOT1. In terms of tissue distribution, expressed in cells that are expanding or producing secondary cell walls.

It localises to the golgi apparatus membrane. Probable glycosyltransferase regulating the assembly and trafficking of cellulose synthase complexes. This Arabidopsis thaliana (Mouse-ear cress) protein is Probable glycosyltransferase STELLO1.